The sequence spans 396 residues: Argininosuccinate synthase (396 aa).

Residues 10–18 (AYSGGLDTS) and Ala-37 each bind ATP. Tyr-88 and Ser-93 together coordinate L-citrulline. Gly-118 is a binding site for ATP. 3 residues coordinate L-aspartate: Thr-120, Asn-124, and Asp-125. Asn-124 is a binding site for L-citrulline. The L-citrulline site is built by Arg-128, Ser-176, Ser-185, Glu-261, and Tyr-273.

The protein belongs to the argininosuccinate synthase family. Type 1 subfamily. Homotetramer.

The protein resides in the cytoplasm. It catalyses the reaction L-citrulline + L-aspartate + ATP = 2-(N(omega)-L-arginino)succinate + AMP + diphosphate + H(+). The protein operates within amino-acid biosynthesis; L-arginine biosynthesis; L-arginine from L-ornithine and carbamoyl phosphate: step 2/3. The sequence is that of Argininosuccinate synthase from Nitratidesulfovibrio vulgaris (strain DP4) (Desulfovibrio vulgaris).